The chain runs to 251 residues: Putative fatty acid elongase DDB_G0274669 (251 aa).

The next 5 helical transmembrane spans lie at 51–71, 82–102, 135–155, 177–197, and 211–231; these read FQIIPIVLVIYLVTIFSIKFL, FISILHNAILCIWSLIMCVGV, WSYIFYISKFYELLDTVIIVL, YITMIQILQFVCLGIAGVLHV, and AFAAAYSINFSFLFLFSKFFV.

This sequence belongs to the ELO family.

The protein resides in the membrane. It carries out the reaction a very-long-chain acyl-CoA + malonyl-CoA + H(+) = a very-long-chain 3-oxoacyl-CoA + CO2 + CoA. Functionally, could be implicated in synthesis of very long chain fatty acids. The protein is Putative fatty acid elongase DDB_G0274669 of Dictyostelium discoideum (Social amoeba).